Consider the following 313-residue polypeptide: Dehydrodolichyl diphosphate synthase CPT5, chloroplastic (313 aa).

A chloroplast-targeting transit peptide spans 1 to 42 (MAFSFQLQQVFPFPVKFCSQPKSIKLQIFPNLTKRLPIHPLA). Residue aspartate 89 is part of the active site.

The protein belongs to the UPP synthase family. Requires Mg(2+) as cofactor. Expressed in leaf trichomes, stem trichomes and old leaves. Expressed at low levels in young leaves and flowers.

The protein localises to the plastid. It is found in the chloroplast. It carries out the reaction n isopentenyl diphosphate + (2E,6E)-farnesyl diphosphate = a di-trans,poly-cis-polyprenyl diphosphate + n diphosphate. Catalyzes cis-prenyl chain elongation to produce the polyprenyl backbone of dolichol, a glycosyl carrier-lipid required for the biosynthesis of several classes of glycoprotein. This chain is Dehydrodolichyl diphosphate synthase CPT5, chloroplastic, found in Solanum lycopersicum (Tomato).